Reading from the N-terminus, the 738-residue chain is Catalase-peroxidase 2 (738 aa).

An N-terminal signal peptide occupies residues 1-26 (MKRTLPTLSALALSMSLALAAGQTQA). The segment at residues 104 to 226 (WHSAGVYRIF…LGATQMGLIY (123 aa)) is a cross-link (tryptophyl-tyrosyl-methioninium (Trp-Tyr) (with M-252)). Catalysis depends on His105, which acts as the Proton acceptor. Residues 226–252 (YVNPEGPNGVPDPLAAARDIRETFGRM) constitute a cross-link (tryptophyl-tyrosyl-methioninium (Tyr-Met) (with W-104)). Heme b is bound at residue His267.

It belongs to the peroxidase family. Peroxidase/catalase subfamily. In terms of assembly, homodimer or homotetramer. It depends on heme b as a cofactor. Post-translationally, formation of the three residue Trp-Tyr-Met cross-link is important for the catalase, but not the peroxidase activity of the enzyme.

It carries out the reaction H2O2 + AH2 = A + 2 H2O. It catalyses the reaction 2 H2O2 = O2 + 2 H2O. Bifunctional enzyme with both catalase and broad-spectrum peroxidase activity. The polypeptide is Catalase-peroxidase 2 (Shewanella amazonensis (strain ATCC BAA-1098 / SB2B)).